The sequence spans 265 residues: MERRKVTIRYFLESKGKRRIAMITAYDYPTARLVDEAGVDGILVGDSLGMVVLGYESTIPVTLTDMLIHVAAVARAKPKALLVADMPFMTYETGPRDALKNASKLIRAGAEAVKPEGGLEIVRIVERLTKAGIPVMGHIGLNPQRVLTLGGFRMMGRTEEQRRKILEDAKALEEAGAFALVIEFVPAGLAREVTESVKIPTICIGAGPYCDGQILVLHDVIGLSEKPPSFAKRYADVASIIRNAVSNYVNEVKESKFPSPEYYKE.

Residues Asp-46 and Asp-85 each contribute to the Mg(2+) site. Residues 46 to 47 (DS), Asp-85, and Lys-114 contribute to the 3-methyl-2-oxobutanoate site. Glu-116 is a binding site for Mg(2+). Glu-183 serves as the catalytic Proton acceptor.

It belongs to the PanB family. In terms of assembly, homodecamer; pentamer of dimers. It depends on Mg(2+) as a cofactor.

Its subcellular location is the cytoplasm. The enzyme catalyses 3-methyl-2-oxobutanoate + (6R)-5,10-methylene-5,6,7,8-tetrahydrofolate + H2O = 2-dehydropantoate + (6S)-5,6,7,8-tetrahydrofolate. It participates in cofactor biosynthesis; coenzyme A biosynthesis. In terms of biological role, catalyzes the reversible reaction in which hydroxymethyl group from 5,10-methylenetetrahydrofolate is transferred onto alpha-ketoisovalerate to form ketopantoate. This chain is 3-methyl-2-oxobutanoate hydroxymethyltransferase, found in Caldivirga maquilingensis (strain ATCC 700844 / DSM 13496 / JCM 10307 / IC-167).